Reading from the N-terminus, the 726-residue chain is Catalase-peroxidase (726 aa).

Residues 1–33 (MSTSDDIHNTTATGKCPFHQGGHDQSAGAGTTT) form a disordered region. Residues 105-226 (WHGAGTYRSI…LGATEMGLIY (122 aa)) constitute a cross-link (tryptophyl-tyrosyl-methioninium (Trp-Tyr) (with M-252)). The active-site Proton acceptor is His-106. Positions 226–252 (YVNPEGPDHSGEPLSAAAAIRATFGNM) form a cross-link, tryptophyl-tyrosyl-methioninium (Tyr-Met) (with W-105). His-267 is a binding site for heme b.

This sequence belongs to the peroxidase family. Peroxidase/catalase subfamily. Homodimer or homotetramer. The cofactor is heme b. In terms of processing, formation of the three residue Trp-Tyr-Met cross-link is important for the catalase, but not the peroxidase activity of the enzyme.

The catalysed reaction is H2O2 + AH2 = A + 2 H2O. It carries out the reaction 2 H2O2 = O2 + 2 H2O. Bifunctional enzyme with both catalase and broad-spectrum peroxidase activity. The sequence is that of Catalase-peroxidase from Shigella flexneri.